Reading from the N-terminus, the 203-residue chain is MSRYTGPSWKQSRRYGISLSGSGKEIARRNYVPGQHGPNNRSKLSEYGLQLAEKQKLRFSYGLSERQFRNLYIAATKVKEGTVGFNFMTLLEQRLDNVVFRLGLATTRRQARQFVNHGHILVDGKRVDIPSFRVQPGQVISVREKSMKVPAILEAVEATKGRANFVSFDADKLEGTLVRLPERDEINPEINEALIVEFYNKMM.

Residues 93–156 form the S4 RNA-binding domain; the sequence is QRLDNVVFRL…MKVPAILEAV (64 aa).

Belongs to the universal ribosomal protein uS4 family. Part of the 30S ribosomal subunit. Contacts protein S5. The interaction surface between S4 and S5 is involved in control of translational fidelity.

In terms of biological role, one of the primary rRNA binding proteins, it binds directly to 16S rRNA where it nucleates assembly of the body of the 30S subunit. With S5 and S12 plays an important role in translational accuracy. The sequence is that of Small ribosomal subunit protein uS4 from Lactococcus lactis subsp. lactis (strain IL1403) (Streptococcus lactis).